The chain runs to 712 residues: Aryl hydrocarbon receptor nuclear translocator 2 (712 aa).

The tract at residues 36–73 is disordered; sequence AGAMPARGGKRRSGMDFDDEDGEGPSKFSRENHSEIER. Arg42 is subject to Omega-N-methylarginine. Residues 63-73 are compositionally biased toward basic and acidic residues; the sequence is FSRENHSEIER. Residues 63–116 form the bHLH domain; that stretch reads FSRENHSEIERRRRNKMTQYITELSDMVPTCSALARKPDKLTILRMAVSHMKSM. PAS domains follow at residues 134 to 209 and 323 to 393; these read TEQE…MTGR and PVCM…VKLK. A PAC domain is found at 398–441; it reads SVMYRFRTKNREWLLIRTSSFTFQNPYSDEIEYVICTNTNVKQL. The tract at residues 573 to 712 is disordered; sequence AWTGSRPPFP…DLGMFPPFSE (140 aa). Low complexity-rich tracts occupy residues 597 to 626 and 653 to 675; these read SSHP…AYPS and SQWQ…QPGQ.

In terms of assembly, efficient DNA binding requires dimerization with another bHLH protein. Heterodimer with NPAS4 or SIM1. Heterodimer with the aryl hydrocarbon receptor (AHR) or the SIM1 protein. Interacts with TACC3. As to expression, restricted to adult brain and kidney.

It localises to the nucleus. Functionally, transcription factor that plays a role in the development of the hypothalamo-pituitary axis, postnatal brain growth, and visual and renal function. Specifically recognizes the xenobiotic response element (XRE). The chain is Aryl hydrocarbon receptor nuclear translocator 2 (Arnt2) from Mus musculus (Mouse).